The sequence spans 259 residues: 7alpha-hydroxysteroid dehydrogenase (259 aa).

NAD(+)-binding positions include I18, 37–38, and N90; that span reads DY. Glycochenodeoxycholate is bound by residues S145 and Y158. Residues Y158, K162, and 191–193 contribute to the NAD(+) site; that span reads ILT. Y158 (proton acceptor) is an active-site residue.

The protein belongs to the short-chain dehydrogenases/reductases (SDR) family. As to quaternary structure, homotetramer.

It catalyses the reaction cholate + NAD(+) = 3alpha,12alpha-dihydroxy-7-oxo-5beta-cholanate + NADH + H(+). The catalysed reaction is chenodeoxycholate + NAD(+) = 7-oxolithocholate + NADH + H(+). The enzyme catalyses taurochenodeoxycholate + NAD(+) = 7-oxotaurolithocholate + NADH + H(+). It carries out the reaction glycochenodeoxycholate + NAD(+) = 7-oxoglycolithocholate + NADH + H(+). It catalyses the reaction taurocholate + NAD(+) = 7-oxo-taurodeoxycholate + NADH + H(+). The catalysed reaction is glycocholate + NAD(+) = 7-oxo-glycodeoxycholate + NADH + H(+). The enzyme catalyses an aromatic primary alcohol + NAD(+) = an aromatic aldehyde + NADH + H(+). It carries out the reaction benzyl alcohol + NAD(+) = benzaldehyde + NADH + H(+). It catalyses the reaction 4-cyanobenzyl alcohol + NAD(+) = 4-cyanobenzaldehyde + NADH + H(+). The catalysed reaction is 4-acetoxybenzyl alcohol + NAD(+) = 4-acetoxybenzaldehyde + NADH + H(+). The enzyme catalyses 4-(trifluoromethyl)benzyl alcohol + NAD(+) = 4-(trifluoromethyl)benzaldehyde + NADH + H(+). In terms of biological role, 7alpha-hydroxysteroid dehydrogenase involved in the metabolism of bile acids in the gut. Catalyzes the NAD(+)-dependent oxidation of the 7alpha-hydroxy group of 7alpha-hydroxysteroids, such as cholate, chenodeoxycholate, taurochenodeoxycholate, glycochenodeoxycholate, taurocholate and glycocholate, to the corresponding 7-oxosteroids. Since it is also able to catalyze the reduction of nonsteroidal carbonyl compounds such as various benzaldehyde analogs to their corresponding benzyl alcohols, this enzyme may also function in the detoxification of xenobiotics containing carbonyl groups in the large intestine. This chain is 7alpha-hydroxysteroid dehydrogenase, found in Bacteroides fragilis (strain ATCC 25285 / DSM 2151 / CCUG 4856 / JCM 11019 / LMG 10263 / NCTC 9343 / Onslow / VPI 2553 / EN-2).